Reading from the N-terminus, the 100-residue chain is MHLLPREQEKLMIVVAADLARRRQARGLKLNYPEAVAIISYELIEGARDGRTVAELMSYGTTLLRREDVMEGVPEMIHDVQIEATFPDGTKLVTVHNPIR.

The protein belongs to the urease gamma subunit family. As to quaternary structure, heterotrimer of UreA (gamma), UreB (beta) and UreC (alpha) subunits. Three heterotrimers associate to form the active enzyme.

The protein localises to the cytoplasm. It carries out the reaction urea + 2 H2O + H(+) = hydrogencarbonate + 2 NH4(+). Its pathway is nitrogen metabolism; urea degradation; CO(2) and NH(3) from urea (urease route): step 1/1. This chain is Urease subunit gamma, found in Paenarthrobacter aurescens (strain TC1).